A 249-amino-acid polypeptide reads, in one-letter code: AA9 family lytic polysaccharide monooxygenase A (249 aa).

The signal sequence occupies residues 1 to 19 (MRGPLCFTLIAIAVTSVVA). Histidine 20 and histidine 97 together coordinate Cu(2+). An intrachain disulfide couples cysteine 60 to cysteine 183. Histidine 163 lines the O2 pocket. Tyrosine 180 is a Cu(2+) binding site.

Belongs to the polysaccharide monooxygenase AA9 family. Cu(2+) is required as a cofactor.

It localises to the secreted. The catalysed reaction is [(1-&gt;4)-beta-D-glucosyl]n+m + reduced acceptor + O2 = 4-dehydro-beta-D-glucosyl-[(1-&gt;4)-beta-D-glucosyl]n-1 + [(1-&gt;4)-beta-D-glucosyl]m + acceptor + H2O.. In terms of biological role, lytic polysaccharide monooxygenase (LPMO) that depolymerizes crystalline and amorphous polysaccharides via the oxidation of scissile alpha- or beta-(1-4)-glycosidic bonds, yielding C4 oxidation products. Catalysis by LPMOs requires the reduction of the active-site copper from Cu(II) to Cu(I) by a reducing agent and H(2)O(2) or O(2) as a cosubstrate. Active on cellulose and cello-oligosaccharides, as well as plant cell wall-derived hemicellulosic polysaccharides. Also active on cello-oligosaccharides such as cellohexaose, cellopentaose or cellotetraose. The protein is AA9 family lytic polysaccharide monooxygenase A of Armillaria gallica (Bulbous honey fungus).